The primary structure comprises 283 residues: Tyrosine recombinase THA_404 (283 aa).

Positions 1–86 (MDKVIEMFSD…SLNSFFNYLE (86 aa)) constitute a Core-binding (CB) domain. A Tyr recombinase domain is found at 107–281 (KIPDFLTEDE…ADQEKFDAVK (175 aa)). Active-site residues include R145, K170, H233, R236, and H259. Y268 serves as the catalytic O-(3'-phospho-DNA)-tyrosine intermediate.

This sequence belongs to the 'phage' integrase family.

It localises to the cytoplasm. In terms of biological role, site-specific tyrosine recombinase, which acts by catalyzing the cutting and rejoining of the recombining DNA molecules. The polypeptide is Tyrosine recombinase THA_404 (Thermosipho africanus (strain TCF52B)).